Reading from the N-terminus, the 179-residue chain is Small ribosomal subunit protein uS7 (179 aa).

This sequence belongs to the universal ribosomal protein uS7 family. Part of the 30S ribosomal subunit. Contacts proteins S9 and S11. Cross-links to IF3 and the P and E site tRNAs.

One of the primary rRNA binding proteins, it binds directly to 16S rRNA where it nucleates assembly of the head domain of the 30S subunit. Is located at the subunit interface close to the decoding center, where it has been shown to contact mRNA. Has been shown to contact tRNA in both the P and E sites; it probably blocks exit of the E site tRNA. Its function is as follows. Protein S7 is also a translational repressor protein; it regulates the expression of the str operon members to different degrees by binding to its mRNA. The chain is Small ribosomal subunit protein uS7 (rpsG) from Escherichia coli (strain K12).